A 122-amino-acid polypeptide reads, in one-letter code: Large ribosomal subunit protein uL14 (122 aa).

Belongs to the universal ribosomal protein uL14 family. As to quaternary structure, part of the 50S ribosomal subunit. Forms a cluster with proteins L3 and L19. In the 70S ribosome, L14 and L19 interact and together make contacts with the 16S rRNA in bridges B5 and B8.

Functionally, binds to 23S rRNA. Forms part of two intersubunit bridges in the 70S ribosome. The chain is Large ribosomal subunit protein uL14 from Xylella fastidiosa (strain 9a5c).